Consider the following 139-residue polypeptide: Nucleoside diphosphate kinase (139 aa).

ATP is bound by residues Lys11, Phe59, Arg87, Thr93, Arg104, and Asn114. His117 serves as the catalytic Pros-phosphohistidine intermediate.

It belongs to the NDK family. Homotetramer. The cofactor is Mg(2+).

It localises to the cytoplasm. It catalyses the reaction a 2'-deoxyribonucleoside 5'-diphosphate + ATP = a 2'-deoxyribonucleoside 5'-triphosphate + ADP. The enzyme catalyses a ribonucleoside 5'-diphosphate + ATP = a ribonucleoside 5'-triphosphate + ADP. In terms of biological role, major role in the synthesis of nucleoside triphosphates other than ATP. The ATP gamma phosphate is transferred to the NDP beta phosphate via a ping-pong mechanism, using a phosphorylated active-site intermediate. The polypeptide is Nucleoside diphosphate kinase (Wolbachia sp. subsp. Drosophila simulans (strain wRi)).